We begin with the raw amino-acid sequence, 890 residues long: DNA mismatch repair protein MutS (890 aa).

607–614 (GPNMSGKS) is a binding site for ATP.

This sequence belongs to the DNA mismatch repair MutS family.

This protein is involved in the repair of mismatches in DNA. It is possible that it carries out the mismatch recognition step. This protein has a weak ATPase activity. This Bacillus thuringiensis (strain Al Hakam) protein is DNA mismatch repair protein MutS.